Reading from the N-terminus, the 875-residue chain is Protein HIR2 (875 aa).

6 WD repeats span residues 10–47 (IHNEQVNALAALGPYIILAGSGGHVMAWRQQQLVDTAF), 118–158 (KSPS…KLSE), 163–201 (KASKPITGIIDPTGQTFTVMTSDRSILVYQINKTGTHKL), 237–277 (PNNA…PAFY), 278–316 (EKPNLKKGTSTRYNLIATSGSTDGTILVWNTKRMKPLFN), and 320–359 (VSSTAINDMSWSQDGFTLFAISNDATLYTFAFQEKDLGVA). A disordered region spans residues 398–473 (ESASAAPIPN…IAPGSKKQKK (76 aa)). Polar residues predominate over residues 424–446 (ANNQTNGIKTIQSTSMEFNTPSY). WD repeat units follow at residues 546–587 (LFQD…LMAP) and 589–626 (VLGVSISFLEACGTYLLCLTSIGELYCWNIEQKKLAFP). Serine 713 is modified (phosphoserine).

Belongs to the WD repeat HIR1 family. Component of the HIR complex, composed of HIR1, HIR2, HIR3 and HPC2. This complex may consist of one copy of HIR1 and HIR3 and two copies of HIR2 and HPC2. The HIR complex interacts with ASF1. Interacts with SNF2. Interacts with SNF5. Interacts with SWI3. Interacts with RTT106.

The protein resides in the nucleus. It is found in the chromosome. Functionally, component of the HIR complex, which cooperates with ASF1 to promote replication-independent chromatin assembly. The HIR complex is also required for the periodic repression of three of the four histone gene loci during the cell cycle as well as for autogenous regulation of the HTA1-HTB1 locus by H2A and H2B. DNA-binding by the HIR complex may repress transcription by inhibiting nucleosome remodeling by the SWI/SNF complex. The HIR complex may also be required for transcriptional silencing of centromeric, telomeric and mating-type loci in the absence of CAF-1. The polypeptide is Protein HIR2 (HIR2) (Saccharomyces cerevisiae (strain ATCC 204508 / S288c) (Baker's yeast)).